The following is a 252-amino-acid chain: Ribosomal RNA small subunit methyltransferase J (252 aa).

Residues arginine 101 to aspartate 102, glutamate 117 to arginine 118, serine 153 to serine 154, and aspartate 171 contribute to the S-adenosyl-L-methionine site.

Belongs to the methyltransferase superfamily. RsmJ family.

Its subcellular location is the cytoplasm. The catalysed reaction is guanosine(1516) in 16S rRNA + S-adenosyl-L-methionine = N(2)-methylguanosine(1516) in 16S rRNA + S-adenosyl-L-homocysteine + H(+). In terms of biological role, specifically methylates the guanosine in position 1516 of 16S rRNA. This chain is Ribosomal RNA small subunit methyltransferase J, found in Salmonella heidelberg (strain SL476).